The sequence spans 448 residues: UDP-N-acetylmuramoylalanine--D-glutamate ligase (448 aa).

UDP-N-acetyl-alpha-D-muramoyl-L-alanine contacts are provided by Lys17, Ser18, Thr38, Arg39, and Gly78. 116–122 is an ATP binding site; sequence GSNAKST. Positions 119, 120, 121, and 122 each coordinate ADP. Residues Asn143 and His188 each coordinate UDP-N-acetyl-alpha-D-muramoyl-L-alanine. Positions 278, 309, 324, and 326 each coordinate ADP.

Belongs to the MurCDEF family.

The protein localises to the cytoplasm. It carries out the reaction UDP-N-acetyl-alpha-D-muramoyl-L-alanine + D-glutamate + ATP = UDP-N-acetyl-alpha-D-muramoyl-L-alanyl-D-glutamate + ADP + phosphate + H(+). Its pathway is cell wall biogenesis; peptidoglycan biosynthesis. In terms of biological role, involved in cell wall formation. Catalyzes the addition of D-glutamate to the peptidoglycan precursor UDP-N-acetylmuramoyl-L-alanine (UMA). This Pseudomonas aeruginosa (strain ATCC 15692 / DSM 22644 / CIP 104116 / JCM 14847 / LMG 12228 / 1C / PRS 101 / PAO1) protein is UDP-N-acetylmuramoylalanine--D-glutamate ligase.